Consider the following 206-residue polypeptide: Large ribosomal subunit protein uL13w (206 aa).

This sequence belongs to the universal ribosomal protein uL13 family.

This chain is Large ribosomal subunit protein uL13w (RPL13AD), found in Arabidopsis thaliana (Mouse-ear cress).